Here is a 61-residue protein sequence, read N- to C-terminus: Large ribosomal subunit protein bL28 (61 aa).

Positions 1–21 are disordered; sequence MAKDYVTGKKTTFGNKRSHAM.

This sequence belongs to the bacterial ribosomal protein bL28 family.

The protein is Large ribosomal subunit protein bL28 of Lactobacillus helveticus (strain DPC 4571).